A 147-amino-acid chain; its full sequence is Ribosome maturation factor RimP (147 aa).

Belongs to the RimP family.

It is found in the cytoplasm. Its function is as follows. Required for maturation of 30S ribosomal subunits. This is Ribosome maturation factor RimP from Sulfurihydrogenibium azorense (strain DSM 15241 / OCM 825 / Az-Fu1).